The sequence spans 148 residues: MAFSLENLRPAPGSRPKSKRVGRGSSSGKGKTSSRGHKGQGRGTGKVRMFFEGGQTPLFRRIPIKGFKNRNAKEYVIINLSTLEEVFEEGNVITPEILLEKKIIKNLKDGVKILGKGELTKALVVKAHAFSRTAKEKIEAVGGKAEVI.

The interval 1 to 47 (MAFSLENLRPAPGSRPKSKRVGRGSSSGKGKTSSRGHKGQGRGTGKV) is disordered.

Belongs to the universal ribosomal protein uL15 family. In terms of assembly, part of the 50S ribosomal subunit.

Its function is as follows. Binds to the 23S rRNA. This Kosmotoga olearia (strain ATCC BAA-1733 / DSM 21960 / TBF 19.5.1) protein is Large ribosomal subunit protein uL15.